Consider the following 579-residue polypeptide: uncharacterized protein (579 aa).

This sequence belongs to the UbiD family.

This is an uncharacterized protein from Chlamydia muridarum (strain MoPn / Nigg).